The chain runs to 246 residues: Probable transcriptional regulatory protein CLL_A1008 (246 aa).

Belongs to the TACO1 family.

Its subcellular location is the cytoplasm. In Clostridium botulinum (strain Eklund 17B / Type B), this protein is Probable transcriptional regulatory protein CLL_A1008.